A 336-amino-acid chain; its full sequence is NAC domain-containing protein 100 (336 aa).

Residues 16–166 form the NAC domain; it reads LPPGFRFHPT…EWVICRVFQK (151 aa). A DNA-binding region spans residues 113 to 172; sequence VGMKKTLVFYRGRAPKGQKTNWVMHEYRLEGKFSAHNLPKTAKNEWVICRVFQKSAGGKK. Positions 313-336 are disordered; it reads RRFDSQEDPSSSTGPVDLEPFWNY.

It is found in the nucleus. Binds to the promoter regions of genes involved in chlorophyll catabolic processes, such as NYC1, SGR1, SGR2 and PAO. This chain is NAC domain-containing protein 100, found in Arabidopsis thaliana (Mouse-ear cress).